Reading from the N-terminus, the 262-residue chain is MFINLNPLEQFSVYSATSAILGSSSNSLAITSLTNIAILFIIGLLVLTIFQISASSHLIKPTRWNIVLETWVASILGIVKDQIGNDAKNSLIYFPLIFTFFSFVFISNILGMIPYSFTPTSHISVTLGLSIAIMIGVTLIGFSKHQLDFFSLFVPKGTPLALVPLLVLIEFISYSARAFSLALRLTANVSAGHCLFGVISALSVSACIAVSSLLLKGITITLPLAVLVVLYGLELLVALLQSYVFTLLTCSYLADVVNMGDH.

7 helical membrane passes run isoleucine 30–phenylalanine 50, tryptophan 64–glycine 84, leucine 91–glycine 111, isoleucine 123–serine 143, phenylalanine 149–isoleucine 169, leucine 195–leucine 215, and isoleucine 220–leucine 240.

This sequence belongs to the ATPase A chain family. F-type ATPases have 2 components, CF(1) - the catalytic core - and CF(0) - the membrane proton channel. CF(1) has five subunits: alpha(3), beta(3), gamma(1), delta(1), epsilon(1). CF(0) has three main subunits: a, b and c.

The protein localises to the mitochondrion inner membrane. Its function is as follows. Mitochondrial membrane ATP synthase (F(1)F(0) ATP synthase or Complex V) produces ATP from ADP in the presence of a proton gradient across the membrane which is generated by electron transport complexes of the respiratory chain. F-type ATPases consist of two structural domains, F(1) - containing the extramembraneous catalytic core and F(0) - containing the membrane proton channel, linked together by a central stalk and a peripheral stalk. During catalysis, ATP synthesis in the catalytic domain of F(1) is coupled via a rotary mechanism of the central stalk subunits to proton translocation. Key component of the proton channel; it may play a direct role in the translocation of protons across the membrane. This chain is ATP synthase subunit a (ATP6), found in Allomyces macrogynus.